The primary structure comprises 215 residues: Adenylate kinase (215 aa).

10–15 (GTGKGT) contacts ATP. Residues 30–59 (STGDMLRESVVLKNKIGMIIKNIIEEGKLV) are NMP. Residues Thr-31, Arg-36, 57–59 (KLV), 85–88 (GFPR), and Gln-92 contribute to the AMP site. The segment at 122-159 (GRRIHIQSGRIYHVKFKPPKIKDKDDLTGQTLITRKDD) is LID. Residues Arg-123 and 132–133 (IY) each bind ATP. Residues Arg-156 and Arg-167 each coordinate AMP. ATP is bound at residue Leu-200.

Belongs to the adenylate kinase family. As to quaternary structure, monomer.

It is found in the cytoplasm. It catalyses the reaction AMP + ATP = 2 ADP. Its pathway is purine metabolism; AMP biosynthesis via salvage pathway; AMP from ADP: step 1/1. Catalyzes the reversible transfer of the terminal phosphate group between ATP and AMP. Plays an important role in cellular energy homeostasis and in adenine nucleotide metabolism. The chain is Adenylate kinase from Buchnera aphidicola subsp. Acyrthosiphon pisum (strain 5A).